Reading from the N-terminus, the 349-residue chain is Selenide, water dikinase (349 aa).

Residue Cys-17 is part of the active site. ATP contacts are provided by residues Lys-20 and 48–50 (YFD). Asp-51 is a Mg(2+) binding site. ATP-binding positions include Asp-68, Asp-91, and 139–141 (GHS). Position 91 (Asp-91) interacts with Mg(2+). Asp-229 provides a ligand contact to Mg(2+).

The protein belongs to the selenophosphate synthase 1 family. Class I subfamily. Homodimer. Requires Mg(2+) as cofactor.

The catalysed reaction is hydrogenselenide + ATP + H2O = selenophosphate + AMP + phosphate + 2 H(+). In terms of biological role, synthesizes selenophosphate from selenide and ATP. The chain is Selenide, water dikinase from Nitrosomonas eutropha (strain DSM 101675 / C91 / Nm57).